The primary structure comprises 69 residues: FMRFamide-like neuropeptides 24 (69 aa).

An N-terminal signal peptide occupies residues 1 to 25 (MLSSRTSSIILILAILVAIMAVAQC). A propeptide spanning residues 26–51 (RNIQYDVEEMTPEAAFRYAQWGEIPH) is cleaved from the precursor. F64 is modified (phenylalanine amide). The propeptide occupies 68-69 (SI).

The protein belongs to the FARP (FMRFamide related peptide) family.

It is found in the secreted. Functionally, probable FMRFamide-like neuropeptides. Plays a role in behaviors associated with a sleep-like state induced by stress (SIS), acting in concert with the FMRFamide related peptide flp-13 and neuropeptide-like protein nlp-8. The chain is FMRFamide-like neuropeptides 24 from Caenorhabditis elegans.